Consider the following 155-residue polypeptide: uncharacterized protein (155 aa).

Positions 1–34 (MESLQTPQHRENQDKREKEYGVKHMPMGNNAGNL) are disordered. A compositionally biased stretch (basic and acidic residues) spans 8–22 (QHRENQDKREKEYGV). The chain crosses the membrane as a helical span at residues 115–135 (MSLLLLPAFSGLTWAPFLFLF).

It is found in the membrane. This is an uncharacterized protein from Homo sapiens (Human).